We begin with the raw amino-acid sequence, 336 residues long: tRNA-splicing endonuclease (336 aa).

Active-site residues include Tyr-271, His-282, and Lys-313.

It belongs to the tRNA-intron endonuclease family. Archaeal long subfamily. As to quaternary structure, homodimer.

The catalysed reaction is pretRNA = a 3'-half-tRNA molecule with a 5'-OH end + a 5'-half-tRNA molecule with a 2',3'-cyclic phosphate end + an intron with a 2',3'-cyclic phosphate and a 5'-hydroxyl terminus.. Its function is as follows. Endonuclease that removes tRNA introns. Cleaves pre-tRNA at the 5'- and 3'-splice sites to release the intron. The products are an intron and two tRNA half-molecules bearing 2',3' cyclic phosphate and 5'-OH termini. Recognizes a pseudosymmetric substrate in which 2 bulged loops of 3 bases are separated by a stem of 4 bp. This is tRNA-splicing endonuclease from Natronomonas pharaonis (strain ATCC 35678 / DSM 2160 / CIP 103997 / JCM 8858 / NBRC 14720 / NCIMB 2260 / Gabara) (Halobacterium pharaonis).